The following is a 460-amino-acid chain: MAKAPKRAFVCNECGADYPRWQGQCSACHAWNTITEVRLAASPMVARNERLSGYAGSAGVAKVQKLSDISLEELPRFSTGFKEFDRVLGGGVVPGSAILIGGNPGAGKSTLLLQTLCKLAQQMKTLYVTGEESLQQVAMRAHRLGLPTDNLNMLSETSIEQICLIAEEEQPKLMVIDSIQVMHMADVQSSPGSVAQVRETAAYLTRFAKTRGVAIVMVGHVTKDGSLAGPKVLEHCIDCSVLLDGDADSRFRTLRSHKNRFGAVNELGVFAMTEQGLREVSNPSAIFLSRGDEVTSGSSVMVVWEGTRPLLVEIQALVDHSMMANPRRVAVGLEQNRLAILLAVLHRHGGLQMADQDVFVNVVGGVKVTETSADLALLLAMVSSLRDRPLPQDLVVFGEVGLAGEIRPVPSGQERISEAAKHGFRRAIVPAANVPKKAPEGMQIFGVKKLSDALSVFDDL.

The segment at 11-28 (CNECGADYPRWQGQCSAC) adopts a C4-type zinc-finger fold. An ATP-binding site is contributed by 102–109 (GNPGAGKS). Positions 258–262 (KNRFG) match the RadA KNRFG motif motif. The interval 357 to 460 (DVFVNVVGGV…SDALSVFDDL (104 aa)) is lon-protease-like.

It belongs to the RecA family. RadA subfamily.

DNA-dependent ATPase involved in processing of recombination intermediates, plays a role in repairing DNA breaks. Stimulates the branch migration of RecA-mediated strand transfer reactions, allowing the 3' invading strand to extend heteroduplex DNA faster. Binds ssDNA in the presence of ADP but not other nucleotides, has ATPase activity that is stimulated by ssDNA and various branched DNA structures, but inhibited by SSB. Does not have RecA's homology-searching function. Genetic experiments involving combination of radA mutations with mutations in recA, recB, recG, recJ, recQ, ruvA and ruvC show it plays a role in recombination and recombinational repair, probably involving stabilizing or processing branched DNA or blocked replication forks. Is genetically synergistic to RecG and RuvABC. May be involved in recovery of genetic rearrangements during replication fork breakdown. In combination with RadD is important in recovery from double-strand DNA breaks (DSB). This Escherichia coli (strain K12) protein is DNA repair protein RadA.